The sequence spans 296 residues: PYK10-binding protein 2 (296 aa).

The segment at 1–20 (MAQKVEAKGGKGGNQWDDGS) is disordered. Residue Ala-2 is modified to N-acetylalanine. 2 consecutive Jacalin-type lectin domains span residues 2-142 (AQKV…YFAP) and 150-293 (AKPL…HVRP).

It belongs to the jacalin lectin family. Component of the PYK10 complex, at least composed of PYK10/BGLU23, BGLU21, BGLU22, JAL22, JAL23, PBP1/JAL30, PBP2/JAL31, JAL32, JAL33, JAL34, JAL35, GLL22 and GLL23.

Its function is as follows. Polymerizer-type lectin that may facilitate the correct polymerization of BGLU23/PYK10 upon tissue damage. Activates BGLU21, BGLU22 and BGLU23. The polypeptide is PYK10-binding protein 2 (PBP2) (Arabidopsis thaliana (Mouse-ear cress)).